The chain runs to 729 residues: Fatty acid oxidation complex subunit alpha (729 aa).

The segment at M1–D189 is enoyl-CoA hydratase/isomerase. Residue D296 participates in substrate binding. Residues A311 to A729 are 3-hydroxyacyl-CoA dehydrogenase. NAD(+) contacts are provided by residues M324, D343, V400–E402, K407, and S429. The active-site For 3-hydroxyacyl-CoA dehydrogenase activity is the H450. Residue N453 coordinates NAD(+). Residues N500 and Y660 each contribute to the substrate site.

The protein in the N-terminal section; belongs to the enoyl-CoA hydratase/isomerase family. It in the C-terminal section; belongs to the 3-hydroxyacyl-CoA dehydrogenase family. In terms of assembly, heterotetramer of two alpha chains (FadB) and two beta chains (FadA).

It catalyses the reaction a (3S)-3-hydroxyacyl-CoA + NAD(+) = a 3-oxoacyl-CoA + NADH + H(+). The enzyme catalyses a (3S)-3-hydroxyacyl-CoA = a (2E)-enoyl-CoA + H2O. The catalysed reaction is a 4-saturated-(3S)-3-hydroxyacyl-CoA = a (3E)-enoyl-CoA + H2O. It carries out the reaction (3S)-3-hydroxybutanoyl-CoA = (3R)-3-hydroxybutanoyl-CoA. It catalyses the reaction a (3Z)-enoyl-CoA = a 4-saturated (2E)-enoyl-CoA. The enzyme catalyses a (3E)-enoyl-CoA = a 4-saturated (2E)-enoyl-CoA. It participates in lipid metabolism; fatty acid beta-oxidation. Functionally, involved in the aerobic and anaerobic degradation of long-chain fatty acids via beta-oxidation cycle. Catalyzes the formation of 3-oxoacyl-CoA from enoyl-CoA via L-3-hydroxyacyl-CoA. It can also use D-3-hydroxyacyl-CoA and cis-3-enoyl-CoA as substrate. This is Fatty acid oxidation complex subunit alpha from Yersinia pseudotuberculosis serotype IB (strain PB1/+).